Consider the following 227-residue polypeptide: ATP-dependent dethiobiotin synthetase BioD (227 aa).

An ATP-binding site is contributed by 13–18 (DIGKTY). Threonine 17 serves as a coordination point for Mg(2+). Lysine 38 is a catalytic residue. Serine 42 is a substrate binding site. ATP is bound by residues aspartate 55, 116–119 (EGSG), and 179–180 (NN). Residues aspartate 55 and glutamate 116 each coordinate Mg(2+).

The protein belongs to the dethiobiotin synthetase family. Homodimer. Mg(2+) serves as cofactor.

The protein localises to the cytoplasm. It carries out the reaction (7R,8S)-7,8-diammoniononanoate + CO2 + ATP = (4R,5S)-dethiobiotin + ADP + phosphate + 3 H(+). It functions in the pathway cofactor biosynthesis; biotin biosynthesis; biotin from 7,8-diaminononanoate: step 1/2. Catalyzes a mechanistically unusual reaction, the ATP-dependent insertion of CO2 between the N7 and N8 nitrogen atoms of 7,8-diaminopelargonic acid (DAPA, also called 7,8-diammoniononanoate) to form a ureido ring. In Clostridium botulinum (strain ATCC 19397 / Type A), this protein is ATP-dependent dethiobiotin synthetase BioD.